A 57-amino-acid polypeptide reads, in one-letter code: Large ribosomal subunit protein bL32 (57 aa).

A disordered region spans residues 1 to 37 (MAVQQNKPTRSKRGMRRSHDALTAVTSLSVDKTSGEK).

It belongs to the bacterial ribosomal protein bL32 family.

This is Large ribosomal subunit protein bL32 from Escherichia fergusonii (strain ATCC 35469 / DSM 13698 / CCUG 18766 / IAM 14443 / JCM 21226 / LMG 7866 / NBRC 102419 / NCTC 12128 / CDC 0568-73).